We begin with the raw amino-acid sequence, 242 residues long: ATP-dependent dethiobiotin synthetase BioD (242 aa).

Glu-12 to Val-17 serves as a coordination point for ATP. A Mg(2+)-binding site is contributed by Thr-16. The active site involves Lys-37. Ser-41 lines the substrate pocket. ATP contacts are provided by residues Asp-51 and Glu-112–Gly-115. Mg(2+)-binding residues include Asp-51 and Glu-112.

The protein belongs to the dethiobiotin synthetase family. Homodimer. Mg(2+) is required as a cofactor.

It localises to the cytoplasm. The enzyme catalyses (7R,8S)-7,8-diammoniononanoate + CO2 + ATP = (4R,5S)-dethiobiotin + ADP + phosphate + 3 H(+). It participates in cofactor biosynthesis; biotin biosynthesis; biotin from 7,8-diaminononanoate: step 1/2. Catalyzes a mechanistically unusual reaction, the ATP-dependent insertion of CO2 between the N7 and N8 nitrogen atoms of 7,8-diaminopelargonic acid (DAPA, also called 7,8-diammoniononanoate) to form a ureido ring. The sequence is that of ATP-dependent dethiobiotin synthetase BioD from Bacillus cereus (strain ATCC 14579 / DSM 31 / CCUG 7414 / JCM 2152 / NBRC 15305 / NCIMB 9373 / NCTC 2599 / NRRL B-3711).